We begin with the raw amino-acid sequence, 191 residues long: Protein RER1A (191 aa).

At methionine 1 the chain carries N-acetylmethionine. The next 4 membrane-spanning stretches (helical) occupy residues 39 to 57, 60 to 80, 115 to 135, and 136 to 156; these read YRWI…RVYY, GFYI…IGFL, FKFW…TFFS, and VFDV…LFVL.

The protein belongs to the RER1 family.

It localises to the membrane. Its function is as follows. Involved in the retrieval of endoplasmic reticulum membrane proteins from the early Golgi compartment. This chain is Protein RER1A (RER1A), found in Arabidopsis thaliana (Mouse-ear cress).